Consider the following 405-residue polypeptide: S-adenosylmethionine synthase (405 aa).

Position 141–146 (141–146 (GQGSVD)) interacts with ATP.

Belongs to the AdoMet synthase 2 family. Mg(2+) is required as a cofactor.

It catalyses the reaction L-methionine + ATP + H2O = S-adenosyl-L-methionine + phosphate + diphosphate. The protein operates within amino-acid biosynthesis; S-adenosyl-L-methionine biosynthesis; S-adenosyl-L-methionine from L-methionine: step 1/1. In terms of biological role, catalyzes the formation of S-adenosylmethionine from methionine and ATP. The protein is S-adenosylmethionine synthase of Methanococcus maripaludis (strain C6 / ATCC BAA-1332).